A 112-amino-acid polypeptide reads, in one-letter code: UPF0145 protein RB3016 (112 aa).

The protein belongs to the UPF0145 family.

This is UPF0145 protein RB3016 from Rhodopirellula baltica (strain DSM 10527 / NCIMB 13988 / SH1).